Reading from the N-terminus, the 362-residue chain is Phosphoserine aminotransferase (362 aa).

Residue arginine 43 participates in L-glutamate binding. Pyridoxal 5'-phosphate is bound by residues 77-78, tryptophan 103, threonine 153, aspartate 173, and glutamine 196; that span reads AS. Position 197 is an N6-(pyridoxal phosphate)lysine (lysine 197). 238-239 serves as a coordination point for pyridoxal 5'-phosphate; that stretch reads NT.

It belongs to the class-V pyridoxal-phosphate-dependent aminotransferase family. SerC subfamily. As to quaternary structure, homodimer. It depends on pyridoxal 5'-phosphate as a cofactor.

Its subcellular location is the cytoplasm. The enzyme catalyses O-phospho-L-serine + 2-oxoglutarate = 3-phosphooxypyruvate + L-glutamate. The catalysed reaction is 4-(phosphooxy)-L-threonine + 2-oxoglutarate = (R)-3-hydroxy-2-oxo-4-phosphooxybutanoate + L-glutamate. Its pathway is amino-acid biosynthesis; L-serine biosynthesis; L-serine from 3-phospho-D-glycerate: step 2/3. The protein operates within cofactor biosynthesis; pyridoxine 5'-phosphate biosynthesis; pyridoxine 5'-phosphate from D-erythrose 4-phosphate: step 3/5. Functionally, catalyzes the reversible conversion of 3-phosphohydroxypyruvate to phosphoserine and of 3-hydroxy-2-oxo-4-phosphonooxybutanoate to phosphohydroxythreonine. In Niallia circulans (Bacillus circulans), this protein is Phosphoserine aminotransferase (serC).